We begin with the raw amino-acid sequence, 289 residues long: Acetyl-coenzyme A carboxylase carboxyl transferase subunit beta (289 aa).

The CoA carboxyltransferase N-terminal domain occupies M34–F289. The Zn(2+) site is built by C38, C41, C57, and C60. The C4-type zinc finger occupies C38–C60.

The protein belongs to the AccD/PCCB family. As to quaternary structure, acetyl-CoA carboxylase is a heterohexamer composed of biotin carboxyl carrier protein (AccB), biotin carboxylase (AccC) and two subunits each of ACCase subunit alpha (AccA) and ACCase subunit beta (AccD). It depends on Zn(2+) as a cofactor.

The protein localises to the cytoplasm. It carries out the reaction N(6)-carboxybiotinyl-L-lysyl-[protein] + acetyl-CoA = N(6)-biotinyl-L-lysyl-[protein] + malonyl-CoA. It functions in the pathway lipid metabolism; malonyl-CoA biosynthesis; malonyl-CoA from acetyl-CoA: step 1/1. Component of the acetyl coenzyme A carboxylase (ACC) complex. Biotin carboxylase (BC) catalyzes the carboxylation of biotin on its carrier protein (BCCP) and then the CO(2) group is transferred by the transcarboxylase to acetyl-CoA to form malonyl-CoA. In Clostridium botulinum (strain Loch Maree / Type A3), this protein is Acetyl-coenzyme A carboxylase carboxyl transferase subunit beta.